We begin with the raw amino-acid sequence, 309 residues long: Lipoyl synthase (309 aa).

[4Fe-4S] cluster contacts are provided by C43, C48, C54, C70, C74, C77, and S283. Residues A56–S272 form the Radical SAM core domain.

The protein belongs to the radical SAM superfamily. Lipoyl synthase family. The cofactor is [4Fe-4S] cluster.

The protein resides in the cytoplasm. It carries out the reaction [[Fe-S] cluster scaffold protein carrying a second [4Fe-4S](2+) cluster] + N(6)-octanoyl-L-lysyl-[protein] + 2 oxidized [2Fe-2S]-[ferredoxin] + 2 S-adenosyl-L-methionine + 4 H(+) = [[Fe-S] cluster scaffold protein] + N(6)-[(R)-dihydrolipoyl]-L-lysyl-[protein] + 4 Fe(3+) + 2 hydrogen sulfide + 2 5'-deoxyadenosine + 2 L-methionine + 2 reduced [2Fe-2S]-[ferredoxin]. It participates in protein modification; protein lipoylation via endogenous pathway; protein N(6)-(lipoyl)lysine from octanoyl-[acyl-carrier-protein]. In terms of biological role, catalyzes the radical-mediated insertion of two sulfur atoms into the C-6 and C-8 positions of the octanoyl moiety bound to the lipoyl domains of lipoate-dependent enzymes, thereby converting the octanoylated domains into lipoylated derivatives. In Shouchella clausii (strain KSM-K16) (Alkalihalobacillus clausii), this protein is Lipoyl synthase.